The following is an 811-amino-acid chain: MGGGPRTFPGGLSKWQHKRMHEKLARHKERGLLRHEKQLYLARLRSEIRASRLPAAGASPPDDGDGPTSSRAHIRALADRFLLPGAEDLWNEDDGPIHRADRPRPPRRIVSVGGNGGDRRKLDSTKQELPRGGKEPRLAAFNPRRDFQTAAPWWWQWSSSSAIPSRTKEASFCFFGPKRSYSVMPLFQAHQESSGTSMVPLIARGLASARIAPSQLNGERFYSFAAGRFGRKLRPDSSDEDDEDISTAKKDMRFARFGASSEEESGYDELEARSAIRKKWSSAALRNCDMKKERRALKSYEEENNDLAGSFRELREEIKNREVLGAERRRYESRGESLFTNKRFEECGISPLTVKALTDAGYVQTTVVQETALPMCLEGKDVLVKAKTGTGKSAAFLLPAIESVLNAMKSHTNHRVSPIFSLILCPTRELAIQLTAEANVLLKYHQGIGVQSLIGGTRFKLDQRRLESDPCQILVATPGRLLDHIENKSSFSVRLMGLKLLVLDEADHLLDLGFRTDIEKIVDSLPRQRQTLLFSATIPKEVRRVSQLVLKRDHVFVDTVGLGAVETPTKVEQLYLVMPHELHFHMVYRLLREHIDQEVDYKVIVFCTTAMVTEFMYIMLRDLKLNVREIHSRKPQLYRTRISEEFRDSSRLILVTSDVSTRGVNYPGVTLVIQVGVPSDREHYIHRLGRTGREGKSGKGILLLAPWEEYFLNEIHDLPVQKSQTPNIDEEMKRKVDGSIKIVDMSIKEAAYHAWLGYYNSIGDVGRDKTMLVDLANRFCKSIGLEKPPALYRKTALKMGLKDVPGIRIRK.

2 disordered regions span residues methionine 1 to leucine 32 and aspartate 93 to leucine 138. Positions tryptophan 15–glutamate 29 are enriched in basic residues. Basic and acidic residues-rich tracts occupy residues glycine 95 to arginine 104 and glycine 117 to leucine 138. The stretch at arginine 286–serine 333 forms a coiled coil. A Q motif motif is present at residues lysine 342–glutamate 370. Residues leucine 373–phenylalanine 556 enclose the Helicase ATP-binding domain. Alanine 386 to serine 393 lines the ATP pocket. A DEAD box motif is present at residues aspartate 504–aspartate 507. Residues lysine 570–isoleucine 740 form the Helicase C-terminal domain.

Belongs to the DEAD box helicase family.

It catalyses the reaction ATP + H2O = ADP + phosphate + H(+). This chain is DEAD-box ATP-dependent RNA helicase 48, found in Oryza sativa subsp. japonica (Rice).